A 199-amino-acid chain; its full sequence is dITP/XTP pyrophosphatase (199 aa).

7–12 (SANKGK) is a substrate binding site. Mg(2+) contacts are provided by aspartate 38 and aspartate 73. Aspartate 73 serves as the catalytic Proton acceptor. Residues serine 74, 155 to 158 (FGYD), lysine 178, and 183 to 184 (HR) contribute to the substrate site.

The protein belongs to the HAM1 NTPase family. In terms of assembly, homodimer. The cofactor is Mg(2+).

It catalyses the reaction XTP + H2O = XMP + diphosphate + H(+). The catalysed reaction is dITP + H2O = dIMP + diphosphate + H(+). The enzyme catalyses ITP + H2O = IMP + diphosphate + H(+). Pyrophosphatase that catalyzes the hydrolysis of nucleoside triphosphates to their monophosphate derivatives, with a high preference for the non-canonical purine nucleotides XTP (xanthosine triphosphate), dITP (deoxyinosine triphosphate) and ITP. Seems to function as a house-cleaning enzyme that removes non-canonical purine nucleotides from the nucleotide pool, thus preventing their incorporation into DNA/RNA and avoiding chromosomal lesions. The sequence is that of dITP/XTP pyrophosphatase from Aliarcobacter butzleri (strain RM4018) (Arcobacter butzleri).